Here is a 649-residue protein sequence, read N- to C-terminus: Acetyl-coenzyme A synthetase (649 aa).

CoA contacts are provided by residues 191–194, Thr311, and Asn335; that span reads RGGR. Residues 387-389, 411-416, Asp500, and Arg515 each bind ATP; these read GEP and DTWWQT. Ser523 contributes to the CoA binding site. Position 526 (Arg526) interacts with ATP. 3 residues coordinate Mg(2+): Val537, His539, and Ile542. Residue Arg584 participates in CoA binding. Lys609 carries the N6-acetyllysine modification.

It belongs to the ATP-dependent AMP-binding enzyme family. Requires Mg(2+) as cofactor. Acetylated. Deacetylation by the SIR2-homolog deacetylase activates the enzyme.

It catalyses the reaction acetate + ATP + CoA = acetyl-CoA + AMP + diphosphate. In terms of biological role, catalyzes the conversion of acetate into acetyl-CoA (AcCoA), an essential intermediate at the junction of anabolic and catabolic pathways. AcsA undergoes a two-step reaction. In the first half reaction, AcsA combines acetate with ATP to form acetyl-adenylate (AcAMP) intermediate. In the second half reaction, it can then transfer the acetyl group from AcAMP to the sulfhydryl group of CoA, forming the product AcCoA. The sequence is that of Acetyl-coenzyme A synthetase from Psychromonas ingrahamii (strain DSM 17664 / CCUG 51855 / 37).